The primary structure comprises 346 residues: Probable dual-specificity RNA methyltransferase RlmN (346 aa).

Residue Glu-92 is the Proton acceptor of the active site. The 235-residue stretch at 98 to 332 (TDQRLTVCVS…VSLRASRGLD (235 aa)) folds into the Radical SAM core domain. Cys-105 and Cys-337 are joined by a disulfide. The [4Fe-4S] cluster site is built by Cys-112, Cys-116, and Cys-119. Residues 159–160 (GE), Ser-189, 218–220 (SLH), and Asn-294 contribute to the S-adenosyl-L-methionine site. The S-methylcysteine intermediate role is filled by Cys-337.

Belongs to the radical SAM superfamily. RlmN family. The cofactor is [4Fe-4S] cluster.

The protein localises to the cytoplasm. It carries out the reaction adenosine(2503) in 23S rRNA + 2 reduced [2Fe-2S]-[ferredoxin] + 2 S-adenosyl-L-methionine = 2-methyladenosine(2503) in 23S rRNA + 5'-deoxyadenosine + L-methionine + 2 oxidized [2Fe-2S]-[ferredoxin] + S-adenosyl-L-homocysteine. It catalyses the reaction adenosine(37) in tRNA + 2 reduced [2Fe-2S]-[ferredoxin] + 2 S-adenosyl-L-methionine = 2-methyladenosine(37) in tRNA + 5'-deoxyadenosine + L-methionine + 2 oxidized [2Fe-2S]-[ferredoxin] + S-adenosyl-L-homocysteine. Functionally, specifically methylates position 2 of adenine 2503 in 23S rRNA and position 2 of adenine 37 in tRNAs. The sequence is that of Probable dual-specificity RNA methyltransferase RlmN from Synechococcus sp. (strain CC9311).